The sequence spans 886 residues: MAAAAMAISPSIHLHLHLHLHHPPRLHRLLHLSTTSPYPWLSAWPTAHRRRVPLRRPASALDLRPEPSPSSDSDDDAAFGTSRSSSRSAMSLILSRLRNSGYSYSPPELPPRPPRGSVEDVFRVDDGVVPNARGGFDDDAESALVDARFPWELPMPPPEAGPRAARSKAWMAELTLPEAELRRLRHAGMRLKSRIKVGGAGVTREIVERIRDRWRNDEVVRIKVTGTPALNMRLFHEILERKTGGLVIWRSGTSVSLYRGVAYDIPEPTKGTSKNTQTLGMKSSIKEPPGHSLLPNEKVNEMQDNNGALVSNAEKDTLVEPVPEIKYEDEIDKLLDELGPRYDDWPRPDPSPVDADLLPATVPGYKPPFRVLPYGVRPSLSRRDTTNLRRLARGLPPHFALGRSRQLQGLAAAMVKLWEKSSIAKIALKRGVQLTTSERMAEDIKKLTGGVMLSRNNDFMVFYRGKDFLSPELAEKLLERERWAKSLQDEEQARLNAASSFSSRTEAPVEPTVAGTLGETLEANSKYGNKLDENYENKMTRTVEAARHADLVRKLEWKLQLAQKKIEKAERVLGKVETALKPTEGIQPPETITDEERFMFRKLGLRMKAFLLLGRRGVFDGTIENMHLHWKYRELVKILVKAKSFGDVKKIALSLEAESGGILVSVDKVSKGYAIVVFRGKDYARPSKLRPRNLLSKRKALARSIEIQRREALSHHIATLNRRVKKLKAELLQMEGVKEEGDVELYAKLDSAYSSDEEDVEDEDDEAYLRSFDNSVAVQNGDDRTSLDGSDANSDDEGDYSDEDDDEDDDNDEEDGFDYENDDEDDVPPTTSDGDLYNHTDFGSSDSENYVSLSGRGDPDVKSKGSALDSRNSYSEQSTELTNTCS.

Residues 1–70 (MAAAAMAISP…LDLRPEPSPS (70 aa)) constitute a chloroplast and mitochondrion transit peptide. Disordered stretches follow at residues 56-84 (RPAS…TSRS) and 269-291 (TKGT…PPGH). 3 CRM domains span residues 174 to 270 (LTLP…EPTK), 378 to 475 (PSLS…ELAE), and 590 to 690 (ETIT…SKLR). The span at 270 to 281 (KGTSKNTQTLGM) shows a compositional bias: polar residues. The interval 771–886 (SFDNSVAVQN…QSTELTNTCS (116 aa)) is disordered. Residues 793-827 (NSDDEGDYSDEDDDEDDDNDEEDGFDYENDDEDDV) show a composition bias toward acidic residues. Polar residues-rich tracts occupy residues 841–852 (DFGSSDSENYVS) and 869–886 (DSRN…NTCS).

Interacts with RNA. Part of large ribonucleo-protein particles that contain CAF1 and/or CAF2, and RNC1.

It is found in the plastid. Its subcellular location is the chloroplast. The protein resides in the mitochondrion. Its function is as follows. Binds specific group II introns in chloroplasts and facilitates their splicing. Acts on subgroup IIB introns. The substrates of the subgroup IIB also require the CRM domain proteins CAF1 or CAF2, with a simultaneous binding of CFM3 and CAF1 or CAF2. May influence the biogenesis of the mitochondrial small ribosomal subunit. The protein is CRM-domain containing factor CFM3, chloroplastic/mitochondrial of Oryza sativa subsp. japonica (Rice).